We begin with the raw amino-acid sequence, 580 residues long: Fumarate hydratase class I, aerobic (580 aa).

The [4Fe-4S] cluster site is built by Cys-105, Cys-224, and Cys-318.

This sequence belongs to the class-I fumarase family. In terms of assembly, homodimer. It depends on [4Fe-4S] cluster as a cofactor.

It catalyses the reaction (S)-malate = fumarate + H2O. It carries out the reaction oxaloacetate = enol-oxaloacetate. It participates in carbohydrate metabolism; tricarboxylic acid cycle; (S)-malate from fumarate: step 1/1. Catalyzes the reversible hydration of fumarate to (S)-malate. Functions as an aerobic enzyme in the direction of malate formation as part of the citric acid cycle. Accounts for about 80% of the fumarase activity when the bacteria grow aerobically. To a lesser extent, also displays D-tartrate dehydratase activity in vitro, but is not able to convert (R)-malate, L-tartrate or meso-tartrate. Can also catalyze the isomerization of enol- to keto-oxaloacetate. In Salmonella typhimurium (strain LT2 / SGSC1412 / ATCC 700720), this protein is Fumarate hydratase class I, aerobic.